Reading from the N-terminus, the 243-residue chain is 3-deoxy-manno-octulosonate cytidylyltransferase (243 aa).

This sequence belongs to the KdsB family.

The protein localises to the cytoplasm. It catalyses the reaction 3-deoxy-alpha-D-manno-oct-2-ulosonate + CTP = CMP-3-deoxy-beta-D-manno-octulosonate + diphosphate. It participates in nucleotide-sugar biosynthesis; CMP-3-deoxy-D-manno-octulosonate biosynthesis; CMP-3-deoxy-D-manno-octulosonate from 3-deoxy-D-manno-octulosonate and CTP: step 1/1. In terms of biological role, activates KDO (a required 8-carbon sugar) for incorporation into bacterial lipopolysaccharide in Gram-negative bacteria. This is 3-deoxy-manno-octulosonate cytidylyltransferase from Wigglesworthia glossinidia brevipalpis.